We begin with the raw amino-acid sequence, 166 residues long: Large ribosomal subunit protein uL10 (166 aa).

It belongs to the universal ribosomal protein uL10 family. Part of the ribosomal stalk of the 50S ribosomal subunit. The N-terminus interacts with L11 and the large rRNA to form the base of the stalk. The C-terminus forms an elongated spine to which L12 dimers bind in a sequential fashion forming a multimeric L10(L12)X complex.

Functionally, forms part of the ribosomal stalk, playing a central role in the interaction of the ribosome with GTP-bound translation factors. In Shewanella amazonensis (strain ATCC BAA-1098 / SB2B), this protein is Large ribosomal subunit protein uL10.